Here is a 280-residue protein sequence, read N- to C-terminus: 2-dehydro-3-deoxyphosphooctonate aldolase (280 aa).

This sequence belongs to the KdsA family.

The protein localises to the cytoplasm. The catalysed reaction is D-arabinose 5-phosphate + phosphoenolpyruvate + H2O = 3-deoxy-alpha-D-manno-2-octulosonate-8-phosphate + phosphate. It participates in carbohydrate biosynthesis; 3-deoxy-D-manno-octulosonate biosynthesis; 3-deoxy-D-manno-octulosonate from D-ribulose 5-phosphate: step 2/3. The protein operates within bacterial outer membrane biogenesis; lipopolysaccharide biosynthesis. The sequence is that of 2-dehydro-3-deoxyphosphooctonate aldolase from Neisseria meningitidis serogroup A / serotype 4A (strain DSM 15465 / Z2491).